Consider the following 101-residue polypeptide: uncharacterized protein (101 aa).

The next 3 helical transmembrane spans lie at Lys-20–Leu-40, Gly-59–Ala-79, and Ser-81–Phe-101.

The protein resides in the endoplasmic reticulum. Its subcellular location is the membrane. This is an uncharacterized protein from Saccharomyces cerevisiae (strain ATCC 204508 / S288c) (Baker's yeast).